We begin with the raw amino-acid sequence, 454 residues long: N-myc 2 proto-oncogene protein (454 aa).

Disordered regions lie at residues 133–166 (EKMQ…HSGT), 231–270 (AAPP…EEEE), and 326–374 (SPYV…VRRR). Acidic residues predominate over residues 256–270 (ALSDEVDEEEDEEEE). Residues 363-374 (RKSDSEDSVRRR) show a composition bias toward basic and acidic residues. The 53-residue stretch at 371 to 423 (VRRRNHNILERQRRNDLRSSFTTLRDHVPELVKNEKAAKVVILKKACEYVHYL) folds into the bHLH domain. The tract at residues 423-444 (LQAKEHQLLMEKEKLQARQQQL) is leucine-zipper.

Efficient DNA binding requires dimerization with another bHLH protein.

The protein resides in the nucleus. This Otospermophilus beecheyi (California ground squirrel) protein is N-myc 2 proto-oncogene protein (N-MYC2).